Consider the following 247-residue polypeptide: MSRFPRRFIDDSSMEDAGISLCPSIHYRPINPNDLDRLEQIHRDIFPIKYESEFFQSVVNGVDIVSWAAVDRSRPDDHSDELIGFVTAKFVLAKDSEIDDLIHYDSSKGEETLIYILTLGVVETYRNRGIAMSLISEVIKYASGLSVCRGVYLHVIAHNNAAICLYKRLMFRCVRRLHGFYLINRHHFDAFLFVYFINGSRTPCSPLEVAMFVVNYMKSGIKSVASKLANKDEKGLKWLFCKDTDCV.

The 174-residue stretch at 25–198 (IHYRPINPND…DAFLFVYFIN (174 aa)) folds into the N-acetyltransferase domain.

The protein belongs to the acetyltransferase family.

It carries out the reaction L-lysyl-[protein] + acetyl-CoA = N(6)-acetyl-L-lysyl-[protein] + CoA + H(+). Functionally, histone acetyltransferase that probably regulates acetylation status of histone H3 during meiosis. Histone acetylation may influence recombination and chromosome segregation. The sequence is that of Histone acetyltransferase MCC1 (MCC1) from Arabidopsis thaliana (Mouse-ear cress).